A 218-amino-acid polypeptide reads, in one-letter code: ATP phosphoribosyltransferase (218 aa).

It belongs to the ATP phosphoribosyltransferase family. Short subfamily. In terms of assembly, heteromultimer composed of HisG and HisZ subunits.

Its subcellular location is the cytoplasm. The catalysed reaction is 1-(5-phospho-beta-D-ribosyl)-ATP + diphosphate = 5-phospho-alpha-D-ribose 1-diphosphate + ATP. It functions in the pathway amino-acid biosynthesis; L-histidine biosynthesis; L-histidine from 5-phospho-alpha-D-ribose 1-diphosphate: step 1/9. In terms of biological role, catalyzes the condensation of ATP and 5-phosphoribose 1-diphosphate to form N'-(5'-phosphoribosyl)-ATP (PR-ATP). Has a crucial role in the pathway because the rate of histidine biosynthesis seems to be controlled primarily by regulation of HisG enzymatic activity. The chain is ATP phosphoribosyltransferase from Synechococcus elongatus (strain ATCC 33912 / PCC 7942 / FACHB-805) (Anacystis nidulans R2).